Consider the following 371-residue polypeptide: MERYSTPLIGPSFAALTNGSVTDKVTPDMAHLVHPYWNQFPAMEPKWAKFLAAYMVLIATISWCGNGVVIYIFSTTKSLRTPANLLVINLAISDFGIMITNTPMMGINLFYETWVLGPLMCDIYGGLGSAFGCSSILSMCMISLDRYNVIVKGMAGQPMTIKLAIMKIALIWFMASIWTLAPVFGWSRYVPEGNLTSCGIDYLERDWNPRSYLIFYSIFVYYLPLFLICYSYWFIIAAVSAHEKAMREQAKKMNVKSLRSSEDADKSAEGKLAKVALVTISLWFMAWTPYTIINTLGLFKYEGLTPLNTIWGACFAKSAACYNPIVYGISHPKYGIALKEKCPCCVFGKVDDGKASDATSQATNNESETKA.

Residues Met1–Trp47 lie on the Extracellular side of the membrane. The N-linked (GlcNAc...) asparagine glycan is linked to Asn18. A helical transmembrane segment spans residues Ala48–Ile72. Over Phe73–Asn84 the chain is Cytoplasmic. Residues Leu85–Phe110 traverse the membrane as a helical segment. Topologically, residues Tyr111 to Tyr124 are extracellular. Cys121 and Cys198 are oxidised to a cystine. The chain crosses the membrane as a helical span at residues Gly125–Leu144. The Cytoplasmic portion of the chain corresponds to Asp145–Leu163. The chain crosses the membrane as a helical span at residues Ala164–Ser187. At Arg188–Ser211 the chain is on the extracellular side. A helical membrane pass occupies residues Tyr212–Val239. Residues Ser240–Lys274 are Cytoplasmic-facing. A helical membrane pass occupies residues Val275–Leu298. Over Phe299 to Thr305 the chain is Extracellular. A helical transmembrane segment spans residues Pro306–Ser330. Lys317 is subject to N6-(retinylidene)lysine. The Cytoplasmic segment spans residues His331–Ala371.

It belongs to the G-protein coupled receptor 1 family. Opsin subfamily. In terms of processing, phosphorylated on some or all of the serine and threonine residues present in the C-terminal region.

Its subcellular location is the cell projection. It is found in the rhabdomere membrane. Its function is as follows. Visual pigments are the light-absorbing molecules that mediate vision. They consist of an apoprotein, opsin, covalently linked to cis-retinal. The sequence is that of Opsin Rh1 (NINAE) from Calliphora vicina (Blue blowfly).